Here is a 62-residue protein sequence, read N- to C-terminus: Photosystem II reaction center X protein (62 aa).

The helical transmembrane segment at 26 to 46 (IASFFAAALLIVIPAAAFLIF) threads the bilayer.

Belongs to the PsbX family. Type 2 subfamily. As to quaternary structure, PSII consists of a core antenna complex that captures photons, and an electron transfer chain that converts photonic excitation into a charge separation. PSII forms dimeric complexes.

The protein resides in the cellular thylakoid membrane. Involved in the binding and/or turnover of quinones at the Q(B) site of Photosystem II. The protein is Photosystem II reaction center X protein of Prochlorococcus marinus subsp. pastoris (strain CCMP1986 / NIES-2087 / MED4).